Reading from the N-terminus, the 610-residue chain is Glutamine--fructose-6-phosphate aminotransferase [isomerizing] (610 aa).

Cysteine 2 (nucleophile; for GATase activity) is an active-site residue. The region spanning 2 to 221 is the Glutamine amidotransferase type-2 domain; that stretch reads CGIVGAVAQR…DGDVVDLQLA (220 aa). 2 consecutive SIS domains span residues 286–426 and 459–600; these read AYKV…TRGR and WADR…VDKP. Lysine 605 functions as the For Fru-6P isomerization activity in the catalytic mechanism.

As to quaternary structure, homodimer.

It is found in the cytoplasm. It catalyses the reaction D-fructose 6-phosphate + L-glutamine = D-glucosamine 6-phosphate + L-glutamate. Catalyzes the first step in hexosamine metabolism, converting fructose-6P into glucosamine-6P using glutamine as a nitrogen source. This is Glutamine--fructose-6-phosphate aminotransferase [isomerizing] from Bordetella pertussis (strain Tohama I / ATCC BAA-589 / NCTC 13251).